The primary structure comprises 394 residues: Elongation factor Tu (394 aa).

The 195-residue stretch at 10–204 (KPHVNVGTIG…ALDTYIPEPE (195 aa)) folds into the tr-type G domain. Residues 19 to 26 (GHVDHGKT) form a G1 region. Residue 19–26 (GHVDHGKT) participates in GTP binding. Thr26 lines the Mg(2+) pocket. Residues 60 to 64 (GITIA) are G2. Residues 81 to 84 (DCPG) form a G3 region. Residues 81–85 (DCPGH) and 136–139 (NKCD) contribute to the GTP site. The tract at residues 136–139 (NKCD) is G4. A G5 region spans residues 174–176 (SAL).

It belongs to the TRAFAC class translation factor GTPase superfamily. Classic translation factor GTPase family. EF-Tu/EF-1A subfamily. As to quaternary structure, monomer.

Its subcellular location is the cytoplasm. It catalyses the reaction GTP + H2O = GDP + phosphate + H(+). GTP hydrolase that promotes the GTP-dependent binding of aminoacyl-tRNA to the A-site of ribosomes during protein biosynthesis. This chain is Elongation factor Tu, found in Vibrio parahaemolyticus serotype O3:K6 (strain RIMD 2210633).